The primary structure comprises 1671 residues: AF4/FMR2 family member lilli (1671 aa).

Disordered regions lie at residues 53-79 (YSQN…QQGI), 126-304 (SAPG…EKDV), 393-599 (LAGE…SNKW), 723-761 (DSGT…QLPG), 774-1162 (PTQS…TTPH), and 1185-1311 (KLTP…LQIG). Residues 70–79 (REKIERQQGI) show a composition bias toward basic and acidic residues. Composition is skewed to low complexity over residues 145–179 (SLGH…QQQQ) and 210–242 (PSSS…SSGG). A Phosphothreonine modification is found at Thr-416. Positions 424–437 (LKTEKNHSLEKQDS) are enriched in basic and acidic residues. Residues 439–450 (LENDLELSESED) are compositionally biased toward acidic residues. Phosphoserine is present on residues Ser-446 and Ser-448. Residues 459 to 479 (SAGNSSNSSESDSSESGSESS) are compositionally biased toward low complexity. Over residues 487–496 (HPNHQQHHHQ) the composition is skewed to basic residues. Low complexity-rich tracts occupy residues 497–522 (LQQQ…PQPL) and 561–587 (PAGV…GSSS). Over residues 588–599 (NKTPSPTESNKW) the composition is skewed to polar residues. Low complexity predominate over residues 723–755 (DSGTSASGSSSSSSSSSDSAVGGEVVPMPGPGE). Residues 774–786 (PTQSQKAPPSNSV) show a composition bias toward polar residues. Positions 800–810 (QRQKKPRKKKA) are enriched in basic residues. A phosphoserine mark is found at Ser-819 and Ser-820. The segment at residues 849–861 (KKGRGRPRKQQQS) is a DNA-binding region (a.T hook). Residues 858–896 (QQQSGGSGNLSSASAGSSSQTKGPTLTAAKKPLAKTPLA) show a composition bias toward low complexity. Residues Ser-869 and Ser-871 each carry the phosphoserine modification. Residues 907–917 (SQSSSNGNTPT) show a composition bias toward polar residues. Composition is skewed to low complexity over residues 947–963 (SSSA…SSSS) and 988–1002 (ALLG…SSGS). The span at 1009–1020 (SRSQVGSGQALA) shows a compositional bias: polar residues. Positions 1032-1058 (SQHSQHLSSSECSSSSGGCTAVCSSSS) are enriched in low complexity. The segment covering 1063-1080 (EGRREKERERKPKSDKNK) has biased composition (basic and acidic residues). The span at 1120-1130 (QPPPPHAPPAA) shows a compositional bias: pro residues. Residues 1188 to 1203 (PAQQNGHLTPKDQATN) show a composition bias toward polar residues. 2 stretches are compositionally biased toward basic and acidic residues: residues 1224 to 1241 (EHPV…EAKF) and 1250 to 1280 (FQLK…EQPP). Phosphoserine is present on Ser-1360. Phosphothreonine is present on Thr-1362. Over residues 1562–1581 (NTPSSISPSNSVGSQGSGSN) the composition is skewed to low complexity. Positions 1562–1586 (NTPSSISPSNSVGSQGSGSNTPPGR) are disordered.

This sequence belongs to the AF4 family.

Its subcellular location is the nucleus. In terms of biological role, has a role in transcriptional regulation. Acts in parallel with the Ras/MAPK and the PI3K/PKB pathways in the control of cell identity and cellular growth. Essential for regulation of the cytoskeleton and cell growth but not for cell proliferation or growth rate. Required specifically for the microtubule-based basal transport of lipid droplets. Plays a partially redundant function downstream of Raf in cell fate specification in the developing eye. Pair-rule protein that regulates embryonic cellularization, gastrulation and segmentation. This chain is AF4/FMR2 family member lilli, found in Drosophila yakuba (Fruit fly).